A 303-amino-acid polypeptide reads, in one-letter code: Recombination-associated protein RdgC (303 aa).

This sequence belongs to the RdgC family.

It localises to the cytoplasm. It is found in the nucleoid. Functionally, may be involved in recombination. The polypeptide is Recombination-associated protein RdgC (Shewanella sediminis (strain HAW-EB3)).